A 180-amino-acid polypeptide reads, in one-letter code: MTSRPETKIPDEITSPYPIIGAGTIESGFGRGSAELGIPTANIPVTSELNKLETGIYYGWCRLVPRNQECAAKQRSDGKKVYFNNGTKLADDELETFPMAMSIGWNPFYNNETKTAEVHIIHKFRENFYGADLRYAVMGHIRPELNYTTKEALIADINKDIEITKDALSKPSYEKYRTKI.

2 residues coordinate Mg(2+): Thr40 and Asn42. The Nucleophile role is filled by Glu117.

The protein belongs to the flavokinase family. It depends on Zn(2+) as a cofactor. The cofactor is Mg(2+).

The catalysed reaction is riboflavin + ATP = FMN + ADP + H(+). The protein operates within cofactor biosynthesis; FMN biosynthesis; FMN from riboflavin (ATP route): step 1/1. In terms of biological role, catalyzes the phosphorylation of riboflavin (vitamin B2) to form flavin mononucleotide (FMN) coenzyme. This is Riboflavin kinase (FMN1) from Meyerozyma guilliermondii (strain ATCC 6260 / CBS 566 / DSM 6381 / JCM 1539 / NBRC 10279 / NRRL Y-324) (Yeast).